Reading from the N-terminus, the 138-residue chain is Ribosomal RNA large subunit methyltransferase H (138 aa).

S-adenosyl-L-methionine contacts are provided by residues glycine 86 and 105-110; that span reads LSPLTF.

This sequence belongs to the RNA methyltransferase RlmH family. In terms of assembly, homodimer.

The protein resides in the cytoplasm. The enzyme catalyses pseudouridine(1915) in 23S rRNA + S-adenosyl-L-methionine = N(3)-methylpseudouridine(1915) in 23S rRNA + S-adenosyl-L-homocysteine + H(+). Its function is as follows. Specifically methylates the pseudouridine at position 1915 (m3Psi1915) in 23S rRNA. The polypeptide is Ribosomal RNA large subunit methyltransferase H (Prochlorococcus marinus (strain MIT 9215)).